The sequence spans 205 residues: Ribonuclease HII (205 aa).

The 191-residue stretch at 15 to 205 (SQVCGIDEAG…SFKLRKLGEK (191 aa)) folds into the RNase H type-2 domain. A divalent metal cation contacts are provided by Asp-21, Glu-22, and Asp-117.

This sequence belongs to the RNase HII family. Mn(2+) serves as cofactor. The cofactor is Mg(2+).

It is found in the cytoplasm. The catalysed reaction is Endonucleolytic cleavage to 5'-phosphomonoester.. Functionally, endonuclease that specifically degrades the RNA of RNA-DNA hybrids. This is Ribonuclease HII from Chlorobaculum tepidum (strain ATCC 49652 / DSM 12025 / NBRC 103806 / TLS) (Chlorobium tepidum).